Reading from the N-terminus, the 345-residue chain is Anthranilate phosphoribosyltransferase (345 aa).

5-phospho-alpha-D-ribose 1-diphosphate is bound by residues Gly-80, 83–84 (GD), Thr-88, 90–93 (NIST), 108–116 (KHGNRSVSS), and Ser-120. Gly-80 provides a ligand contact to anthranilate. Ser-92 lines the Mg(2+) pocket. Asn-111 serves as a coordination point for anthranilate. Arg-166 serves as a coordination point for anthranilate. The Mg(2+) site is built by Asp-225 and Glu-226.

It belongs to the anthranilate phosphoribosyltransferase family. Homodimer. Requires Mg(2+) as cofactor.

It carries out the reaction N-(5-phospho-beta-D-ribosyl)anthranilate + diphosphate = 5-phospho-alpha-D-ribose 1-diphosphate + anthranilate. It functions in the pathway amino-acid biosynthesis; L-tryptophan biosynthesis; L-tryptophan from chorismate: step 2/5. Functionally, catalyzes the transfer of the phosphoribosyl group of 5-phosphorylribose-1-pyrophosphate (PRPP) to anthranilate to yield N-(5'-phosphoribosyl)-anthranilate (PRA). The chain is Anthranilate phosphoribosyltransferase from Acetivibrio thermocellus (strain ATCC 27405 / DSM 1237 / JCM 9322 / NBRC 103400 / NCIMB 10682 / NRRL B-4536 / VPI 7372) (Clostridium thermocellum).